The sequence spans 447 residues: ATP-dependent protease ATPase subunit HslU (447 aa).

ATP-binding positions include I18, G60–E65, D259, E325, and R397.

Belongs to the ClpX chaperone family. HslU subfamily. In terms of assembly, a double ring-shaped homohexamer of HslV is capped on each side by a ring-shaped HslU homohexamer. The assembly of the HslU/HslV complex is dependent on binding of ATP.

It is found in the cytoplasm. ATPase subunit of a proteasome-like degradation complex; this subunit has chaperone activity. The binding of ATP and its subsequent hydrolysis by HslU are essential for unfolding of protein substrates subsequently hydrolyzed by HslV. HslU recognizes the N-terminal part of its protein substrates and unfolds these before they are guided to HslV for hydrolysis. The sequence is that of ATP-dependent protease ATPase subunit HslU from Burkholderia ambifaria (strain MC40-6).